Consider the following 223-residue polypeptide: Deoxyribose-phosphate aldolase (223 aa).

The Proton donor/acceptor role is filled by D92. K154 (schiff-base intermediate with acetaldehyde) is an active-site residue. K182 (proton donor/acceptor) is an active-site residue.

The protein belongs to the DeoC/FbaB aldolase family. DeoC type 1 subfamily.

The protein localises to the cytoplasm. It carries out the reaction 2-deoxy-D-ribose 5-phosphate = D-glyceraldehyde 3-phosphate + acetaldehyde. It functions in the pathway carbohydrate degradation; 2-deoxy-D-ribose 1-phosphate degradation; D-glyceraldehyde 3-phosphate and acetaldehyde from 2-deoxy-alpha-D-ribose 1-phosphate: step 2/2. Catalyzes a reversible aldol reaction between acetaldehyde and D-glyceraldehyde 3-phosphate to generate 2-deoxy-D-ribose 5-phosphate. The sequence is that of Deoxyribose-phosphate aldolase from Haemophilus influenzae (strain 86-028NP).